The chain runs to 1216 residues: 1-phosphatidylinositol 4,5-bisphosphate phosphodiesterase beta-1 (1216 aa).

Cys-17 is lipidated: S-palmitoyl cysteine. Phosphoserine is present on Ser-236. A PI-PLC X-box domain is found at 316–467; the sequence is EDMSQPLSHY…LMYKILVKNK (152 aa). Active-site residues include His-331 and His-378. Residue Ser-417 is modified to Phosphoserine. The interval 469-534 is disordered; that stretch reads KSHKSSEGSG…MDEGTAGSEA (66 aa). A compositionally biased stretch (basic and acidic residues) spans 472 to 483; it reads KSSEGSGKKKLS. Low complexity predominate over residues 491–501; that stretch reads SDSSSVFEPSS. A compositionally biased stretch (acidic residues) spans 507–518; the sequence is ADTESDDDDDDD. Thr-509 is modified (phosphothreonine). 2 positions are modified to phosphoserine: Ser-511 and Ser-582. The region spanning 540–656 is the PI-PLC Y-box domain; that stretch reads MSNLVNYIQP…GYRLKPEFMR (117 aa). One can recognise a C2 domain in the interval 656–784; the sequence is RRPDKHFDPF…CLRNERNQPL (129 aa). Disordered regions lie at residues 834–891, 933–993, 1071–1095, and 1172–1216; these read DEEE…VKAP, LVKR…IEQD, KMDK…EEEK, and KISE…DTPL. A Phosphoserine; by PKC modification is found at Ser-887. Basic and acidic residues-rich tracts occupy residues 941 to 951 and 959 to 979; these read TTDLIKEHTTK and YLRR…KKSE. Phosphoserine occurs at positions 978 and 987. The segment covering 980–991 has biased composition (polar residues); sequence PSSPDHVSSTIE. A compositionally biased stretch (basic and acidic residues) spans 1075–1095; it reads KRQEKITEAKSKDKSQMEEEK. Residues 1187-1198 are compositionally biased toward polar residues; sequence TSDSGKLNQKPP. 2 positions are modified to phosphoserine: Ser-1199 and Ser-1200. Positions 1207–1216 are enriched in basic and acidic residues; it reads NPGKEFDTPL.

As to quaternary structure, interacts with DGKQ. Requires Ca(2+) as cofactor. Post-translationally, palmitoylated. Palmitoylation at Cys-17 by ZDHHC21 regulates the signaling activity of PLCB1 and the function of the endothelial barrier. Palmitoylation by ZDHHC21 is stimulated by inflammation.

It localises to the nucleus membrane. The protein localises to the cytoplasm. The enzyme catalyses a 1,2-diacyl-sn-glycero-3-phospho-(1D-myo-inositol-4,5-bisphosphate) + H2O = 1D-myo-inositol 1,4,5-trisphosphate + a 1,2-diacyl-sn-glycerol + H(+). The catalysed reaction is a 1,2-diacyl-sn-glycero-3-phospho-(1D-myo-inositol) + H2O = 1D-myo-inositol 1-phosphate + a 1,2-diacyl-sn-glycerol + H(+). Functionally, catalyzes the hydrolysis of 1-phosphatidylinositol 4,5-bisphosphate into diacylglycerol (DAG) and inositol 1,4,5-trisphosphate (IP3) and mediates intracellular signaling downstream of G protein-coupled receptors. Regulates the function of the endothelial barrier. This chain is 1-phosphatidylinositol 4,5-bisphosphate phosphodiesterase beta-1 (PLCB1), found in Bos taurus (Bovine).